A 122-amino-acid chain; its full sequence is MPKYFCDYCDTYLTHDSPSVRKTHCSGRKHKDNVKMYYQTWMEEQAQELIDKTTQAFQKGKMGNFGGLPPNGMMMGPRGPMPMMPMMPVRPMGMGGMLPMRPVPPAMMGGGQVMMMGPRPGM.

The Matrin-type zinc-finger motif lies at 4 to 36 (YFCDYCDTYLTHDSPSVRKTHCSGRKHKDNVKM).

It belongs to the U1 small nuclear ribonucleoprotein C family. As to quaternary structure, U1 snRNP is composed of the 7 core Sm proteins B/B', D1, D2, D3, E, F and G that assemble in a heptameric protein ring on the Sm site of the small nuclear RNA to form the core snRNP, and at least 3 U1 snRNP-specific proteins U1-70K, U1-A and U1-C. U1-C interacts with U1 snRNA and the 5' splice-site region of the pre-mRNA.

It is found in the nucleus. Its function is as follows. Component of the spliceosomal U1 snRNP, which is essential for recognition of the pre-mRNA 5' splice-site and the subsequent assembly of the spliceosome. U1-C is directly involved in initial 5' splice-site recognition for both constitutive and regulated alternative splicing. The interaction with the 5' splice-site seems to precede base-pairing between the pre-mRNA and the U1 snRNA. Stimulates commitment or early (E) complex formation by stabilizing the base pairing of the 5' end of the U1 snRNA and the 5' splice-site region. The protein is U1 small nuclear ribonucleoprotein C of Ciona intestinalis (Transparent sea squirt).